A 1217-amino-acid polypeptide reads, in one-letter code: ATP-dependent helicase/nuclease subunit A (1217 aa).

Residues 10-475 (VIWTDAQWQS…IDLSQNFRSR (466 aa)) enclose the UvrD-like helicase ATP-binding domain. An ATP-binding site is contributed by 31 to 38 (AAAGSGKT). In terms of domain architecture, UvrD-like helicase C-terminal spans 476-786 (KEVLSTTNYI…RMMTIHSSKG (311 aa)).

The protein belongs to the helicase family. AddA subfamily. In terms of assembly, heterodimer of AddA and AddB/RexB. The cofactor is Mg(2+).

The enzyme catalyses Couples ATP hydrolysis with the unwinding of duplex DNA by translocating in the 3'-5' direction.. It carries out the reaction ATP + H2O = ADP + phosphate + H(+). In terms of biological role, the heterodimer acts as both an ATP-dependent DNA helicase and an ATP-dependent, dual-direction single-stranded exonuclease. Recognizes the chi site generating a DNA molecule suitable for the initiation of homologous recombination. The AddA nuclease domain is required for chi fragment generation; this subunit has the helicase and 3' -&gt; 5' nuclease activities. The protein is ATP-dependent helicase/nuclease subunit A of Staphylococcus aureus (strain MRSA252).